We begin with the raw amino-acid sequence, 70 residues long: Protein SlyX homolog (70 aa).

This sequence belongs to the SlyX family.

The protein is Protein SlyX homolog of Shewanella baltica (strain OS155 / ATCC BAA-1091).